The chain runs to 635 residues: Chaperone protein DnaK (635 aa).

Threonine 198 carries the post-translational modification Phosphothreonine; by autocatalysis. Positions tyrosine 598–lysine 635 are disordered. Positions histidine 613–aspartate 624 are enriched in basic and acidic residues. Positions alanine 625–lysine 635 are enriched in acidic residues.

The protein belongs to the heat shock protein 70 family.

In terms of biological role, acts as a chaperone. This chain is Chaperone protein DnaK, found in Geotalea uraniireducens (strain Rf4) (Geobacter uraniireducens).